The primary structure comprises 223 residues: Uracil-DNA glycosylase (223 aa).

Residue D67 is the Proton acceptor of the active site.

It belongs to the uracil-DNA glycosylase (UDG) superfamily. UNG family.

Its subcellular location is the cytoplasm. The catalysed reaction is Hydrolyzes single-stranded DNA or mismatched double-stranded DNA and polynucleotides, releasing free uracil.. Functionally, excises uracil residues from the DNA which can arise as a result of misincorporation of dUMP residues by DNA polymerase or due to deamination of cytosine. The chain is Uracil-DNA glycosylase from Borrelia hermsii (strain HS1 / DAH).